The sequence spans 305 residues: Glycine--tRNA ligase alpha subunit (305 aa).

It belongs to the class-II aminoacyl-tRNA synthetase family. As to quaternary structure, tetramer of two alpha and two beta subunits.

It localises to the cytoplasm. The catalysed reaction is tRNA(Gly) + glycine + ATP = glycyl-tRNA(Gly) + AMP + diphosphate. This is Glycine--tRNA ligase alpha subunit from Janthinobacterium sp. (strain Marseille) (Minibacterium massiliensis).